A 60-amino-acid chain; its full sequence is Toxin TdNa2 (60 aa).

The LCN-type CS-alpha/beta domain maps to 1 to 59; the sequence is RDAYPADWRGCKPSCPWGSSSWCNEECTSLGGSSGYCAWPACWCYGLPDSVRYYNNKCH. Cystine bridges form between Cys11–Cys58, Cys15–Cys37, Cys23–Cys42, and Cys27–Cys44.

It belongs to the long (4 C-C) scorpion toxin superfamily. Sodium channel inhibitor family. Beta subfamily. As to expression, expressed by the venom gland.

The protein resides in the secreted. Functionally, inhibits the sodium currents (Nav) in an apparent irreversible manner. Produces small depolarization and induces repetitive firing in squid axons. Is specific for arthropods (crickets, triatomides, crabs and squids), but is non-toxic to mice. The sequence is that of Toxin TdNa2 from Tityus discrepans (Venezuelan scorpion).